The sequence spans 157 residues: Sorting nexin-3 (157 aa).

The interval 1-21 (MSKPFQPISDVINTSPKNKSQ) is disordered. Residues 11 to 21 (VINTSPKNKSQ) show a composition bias toward polar residues. A PX domain is found at 32–152 (NFLEIEVKNP…EFIQNEKWDP (121 aa)). A 1,2-diacyl-sn-glycero-3-phospho-(1D-myo-inositol-3-phosphate) is bound by residues Arg75, Ser77, Lys101, and Arg117.

This sequence belongs to the sorting nexin family.

Its subcellular location is the cytoplasm. It is found in the golgi apparatus membrane. The protein localises to the prevacuolar compartment membrane. Functionally, required for retention of late Golgi membrane proteins. Component of the retrieval machinery that functions by direct interaction with the cytosolic tails of certain TGN membrane proteins during the sorting/budding process at the prevacuolar compartment. Binds phosphatidylinositol 3-phosphate (PtdIns(P3)). The sequence is that of Sorting nexin-3 (SNX3) from Candida albicans (strain SC5314 / ATCC MYA-2876) (Yeast).